A 450-amino-acid polypeptide reads, in one-letter code: MRECISIHIGQAGIQVGNACWELYCLEHGIQPDGQMPGDKTVGGGDDAFNTFFSETGAGKHVPRAVFVDLEPTVIDEVRTGTYRQLFHPEQLISGKEDAANNFARGHYTIGKEIVDLCLDRIRKLADNCTGLQGFLVFNAVGGGTGSGLGSLLLERLSVDYGKKSKLGFTVYPSPQVSTSVVEPYNSVLSTHSLLEHTDVAVLLDNEAIYDICRRSLDIERPTYTNLNRLVSQVISSLTASLRFDGALNVDVTEFQTNLVPYPRIHFMLSSYAPVISAEKAYHEQLSVAEITNSAFEPSSMMAKCDPRHGKYMACCLMYRGDVVPKDVNAAVATIKTKRTIQFVDWCPTGFKCGINYQPPTVVPGGDLAKVQRAVCMISNSTSVAEVFSRIDHKFDLMYAKRAFVHWYVGEGMEEGEFSEAREDLAALEKDYEEVGAESAEGEDDEGDDY.

GTP is bound at residue Q11. K40 carries the post-translational modification N6-acetyllysine. Residues E71, G144, T145, T179, N206, and N228 each contribute to the GTP site. Residue E71 coordinates Mg(2+). Residue E254 is part of the active site.

Belongs to the tubulin family. Dimer of alpha and beta chains. A typical microtubule is a hollow water-filled tube with an outer diameter of 25 nm and an inner diameter of 15 nM. Alpha-beta heterodimers associate head-to-tail to form protofilaments running lengthwise along the microtubule wall with the beta-tubulin subunit facing the microtubule plus end conferring a structural polarity. Microtubules usually have 13 protofilaments but different protofilament numbers can be found in some organisms and specialized cells. Mg(2+) serves as cofactor. Undergoes a tyrosination/detyrosination cycle, the cyclic removal and re-addition of a C-terminal tyrosine residue by the enzymes tubulin tyrosine carboxypeptidase (TTCP) and tubulin tyrosine ligase (TTL), respectively. Post-translationally, acetylation of alpha chains at Lys-40 stabilizes microtubules and affects affinity and processivity of microtubule motors. This modification has a role in multiple cellular functions, ranging from cell motility, cell cycle progression or cell differentiation to intracellular trafficking and signaling.

The protein resides in the cytoplasm. It localises to the cytoskeleton. The catalysed reaction is GTP + H2O = GDP + phosphate + H(+). Functionally, tubulin is the major constituent of microtubules, a cylinder consisting of laterally associated linear protofilaments composed of alpha- and beta-tubulin heterodimers. Microtubules grow by the addition of GTP-tubulin dimers to the microtubule end, where a stabilizing cap forms. Below the cap, tubulin dimers are in GDP-bound state, owing to GTPase activity of alpha-tubulin. This chain is Tubulin alpha chain (TUBA), found in Prunus dulcis (Almond).